The chain runs to 522 residues: Maturase K (522 aa).

The protein belongs to the intron maturase 2 family. MatK subfamily.

It localises to the plastid. Its subcellular location is the chloroplast. Usually encoded in the trnK tRNA gene intron. Probably assists in splicing its own and other chloroplast group II introns. The polypeptide is Maturase K (Watsonia angusta).